The chain runs to 128 residues: Aspartate 1-decarboxylase (128 aa).

S25 functions as the Schiff-base intermediate with substrate; via pyruvic acid in the catalytic mechanism. At S25 the chain carries Pyruvic acid (Ser). A substrate-binding site is contributed by T57. Residue Y58 is the Proton donor of the active site. 73–75 (GSA) contacts substrate.

The protein belongs to the PanD family. Heterooctamer of four alpha and four beta subunits. It depends on pyruvate as a cofactor. In terms of processing, is synthesized initially as an inactive proenzyme, which is activated by self-cleavage at a specific serine bond to produce a beta-subunit with a hydroxyl group at its C-terminus and an alpha-subunit with a pyruvoyl group at its N-terminus.

The protein resides in the cytoplasm. It carries out the reaction L-aspartate + H(+) = beta-alanine + CO2. Its pathway is cofactor biosynthesis; (R)-pantothenate biosynthesis; beta-alanine from L-aspartate: step 1/1. Its function is as follows. Catalyzes the pyruvoyl-dependent decarboxylation of aspartate to produce beta-alanine. In Burkholderia cenocepacia (strain HI2424), this protein is Aspartate 1-decarboxylase.